Consider the following 464-residue polypeptide: Cysteine--tRNA ligase (464 aa).

Position 29 (Cys-29) interacts with Zn(2+). Residues 31–41 carry the 'HIGH' region motif; sequence ATVQGDPHIGH. Zn(2+) is bound by residues Cys-207, His-232, and Glu-236. The 'KMSKS' region motif lies at 263-267; sequence KMSKS. Lys-266 is a binding site for ATP.

It belongs to the class-I aminoacyl-tRNA synthetase family. In terms of assembly, monomer. The cofactor is Zn(2+).

The protein localises to the cytoplasm. The enzyme catalyses tRNA(Cys) + L-cysteine + ATP = L-cysteinyl-tRNA(Cys) + AMP + diphosphate. This Rhodococcus opacus (strain B4) protein is Cysteine--tRNA ligase.